The chain runs to 130 residues: Large ribosomal subunit protein bL12c (130 aa).

Belongs to the bacterial ribosomal protein bL12 family. Homodimer. Part of the ribosomal stalk of the 50S ribosomal subunit. Forms a multimeric L10(L12)X complex, where L10 forms an elongated spine to which 2 to 4 L12 dimers bind in a sequential fashion. Binds GTP-bound translation factors.

It localises to the plastid. Functionally, forms part of the ribosomal stalk which helps the ribosome interact with GTP-bound translation factors. Is thus essential for accurate translation. This Prototheca wickerhamii protein is Large ribosomal subunit protein bL12c.